The following is a 1249-amino-acid chain: Protein STU1 (1249 aa).

2 stretches are compositionally biased toward low complexity: residues 138-156 (LNSS…TATK) and 555-574 (AASP…PSSA). Disordered regions lie at residues 138–161 (LNSS…KPHE), 545–619 (KQLE…NPVF), 644–718 (HVET…LGLG), 755–846 (AEHE…NGNI), 860–891 (AFQT…RPEA), and 1084–1118 (HPAP…EKRT). The span at 581 to 600 (KKMDLKAMLAERRRAVKEAG) shows a compositional bias: basic and acidic residues. Low complexity-rich tracts occupy residues 647–667 (TSSP…RIRP) and 708–718 (SPSLSPSLGLG). The segment covering 755 to 774 (AEHEVDELTLKEGQKTRDDG) has biased composition (basic and acidic residues). Polar residues-rich tracts occupy residues 809 to 822 (QQGN…SGRV), 831 to 844 (ATGT…SRNG), and 863 to 878 (TPLN…SSAI). Low complexity predominate over residues 1089–1111 (SSSADNSDPMTSALSQLSLSSSK).

It belongs to the CLASP family. As to quaternary structure, interacts with microtubules.

Its subcellular location is the cytoplasm. It localises to the cytoskeleton. The protein resides in the nucleus. The protein localises to the spindle. Functionally, microtubule binding protein that promotes the stabilization of dynamic microtubules. Required for mitotic spindle formation. The polypeptide is Protein STU1 (STU1) (Cryptococcus neoformans var. neoformans serotype D (strain JEC21 / ATCC MYA-565) (Filobasidiella neoformans)).